The following is a 1014-amino-acid chain: Exportin-T (1014 aa).

It belongs to the exportin family.

It localises to the nucleus. It is found in the cytoplasm. In terms of biological role, tRNA nucleus export receptor which facilitates tRNA translocation across the nuclear pore complex. Involved in pre-tRNA splicing, probably by affecting the interaction of pre-tRNA with splicing endonuclease. The sequence is that of Exportin-T (LOS1) from Podospora anserina (strain S / ATCC MYA-4624 / DSM 980 / FGSC 10383) (Pleurage anserina).